The sequence spans 503 residues: Proton-coupled zinc antiporter SLC30A1 (503 aa).

At 1–10 (MGCWGRNRGR) the chain is on the cytoplasmic side. The helical transmembrane segment at 11-31 (LLCMLLLTFMFMVLEVVVSRV) threads the bilayer. Over 32-35 (TASL) the chain is Extracellular. A helical transmembrane segment spans residues 36-56 (AMLSDSFHMLSDVLALVVALV). Zn(2+) contacts are provided by His-43 and Asp-47. Topologically, residues 57–78 (AERFARRTHATQKNTFGWIRAE) are cytoplasmic. A helical membrane pass occupies residues 79–99 (VMGALVNAIFLTGLCFAILLE). Residues 100-113 (AVERFIEPHEMQQP) lie on the Extracellular side of the membrane. Residues 114-134 (LVVLSVGVAGLLVNVLGLCLF) form a helical membrane-spanning segment. The Cytoplasmic segment spans residues 135-243 (HHHSGEGQGA…RAGQLNMRGV (109 aa)). Residues 140–213 (EGQGAGHGHS…PEKLRSDDPV (74 aa)) form a disordered region. The interval 145 to 156 (GHGHSHGHGHGH) is 6 X 2 AA approximate repeats of H-G. Residues 147–165 (GHSHGHGHGHLAKGARKAG) are compositionally biased toward basic residues. The span at 184–196 (TNTLVANTSNSNG) shows a compositional bias: polar residues. Over residues 200–211 (DQAEPEKLRSDD) the composition is skewed to basic and acidic residues. A helical membrane pass occupies residues 244–264 (FLHVLGDALGSVIVVVNALVF). Residues His-246 and Asp-250 each coordinate Zn(2+). The Extracellular segment spans residues 265–303 (YFNWKGCTEDDFCTNPCFPDPCKSSVEIINSTQAPMRDA). Asn-294 carries N-linked (GlcNAc...) asparagine glycosylation. A helical transmembrane segment spans residues 304–324 (GPCWVLYLDPTLCIIMVCILL). Residues 325–503 (YTTYPLLKES…VPNKQPESSL (179 aa)) are Cytoplasmic-facing. Ser-502 is modified (phosphoserine).

The protein belongs to the cation diffusion facilitator (CDF) transporter (TC 2.A.4) family. SLC30A subfamily. As to quaternary structure, homodimer. Interacts with TMEM163. Interacts and forms a complex with TMC6 and TMC8; the interaction regulates zinc transport into the ER. In terms of tissue distribution, widely expressed.

It is found in the cell membrane. It localises to the basolateral cell membrane. Its subcellular location is the cytoplasmic vesicle membrane. The protein resides in the cytoplasm. The protein localises to the endoplasmic reticulum membrane. It is found in the golgi apparatus membrane. It localises to the nucleus membrane. The catalysed reaction is Zn(2+)(in) + 2 H(+)(out) = Zn(2+)(out) + 2 H(+)(in). Its function is as follows. Zinc ion:proton antiporter that could function at the plasma membrane mediating zinc efflux from cells against its electrochemical gradient protecting them from intracellular zinc accumulation and toxicity. Alternatively, could prevent the transport to the plasma membrane of CACNB2, the L-type calcium channels regulatory subunit, through a yet to be defined mechanism. By modulating the expression of these channels at the plasma membrane, could prevent calcium and zinc influx into cells. By the same mechanism, could also prevent L-type calcium channels-mediated heavy metal influx into cells. In some cells, could also function as a zinc ion:proton antiporter mediating zinc entry into the lumen of cytoplasmic vesicles. In macrophages, can increase zinc ions concentration into the lumen of cytoplasmic vesicles containing engulfed bacteria and could help inactivate them. Forms a complex with TMC6/EVER1 and TMC8/EVER2 at the ER membrane of keratynocytes which facilitates zinc uptake into the ER. Down-regulates the activity of transcription factors induced by zinc and cytokines. In Mus musculus (Mouse), this protein is Proton-coupled zinc antiporter SLC30A1.